We begin with the raw amino-acid sequence, 566 residues long: MQYTKISHMNPAERVEALTASLVSLSSVNGTVGEGTKADFIKEVITSYPYFQENPSHVWEQAIPNDPYKRKNIFAFIKGHGESRNTVIYHAHLDTVGIEDFGPLKDIAFDCEKLAEYFSRYEFDQDVQRDAKSGEWMFGRGSVDMQSGIAVHLANLLHFSENLETLPGNVLFMANPDEESQHSGILASISELNRLKKEKQLHYLAAINTDFITPLYDGDQTRYIYTGAAGKLLPCFYIYGREVHVGDTLAGIDPNFISSEITSRLHNNIHLAEKVEGELVLPPSCLYQRDNKESYNVQTAVSTSLYFNCFIYERTAKEMMDLLIEVTEEACRETEQKLSDYYEEYVKRANLPKKHLSWGIQVYSLEQYLEKLRNRGIDPEQCIEQTFKANEHLELRMRCFQAIEELQKLDPDQGAKVILFYAPPYLPHNYLKEDSARDQLLQHVIKEAADKTAESTGETFVFKKFFPYLADGSFLSLHETDGEIDSFIRNFPGWNMIGTIPFKDIRKLNIPSINMGVYGKDGHKWTERVYKPYTFHVLPLLIQQTTVHLLQSYRMTITAKEPKGEG.

In terms of biological role, involved in arginine degradative pathway. The sequence is that of Protein RocB (rocB) from Bacillus subtilis (strain 168).